We begin with the raw amino-acid sequence, 260 residues long: Taurine import ATP-binding protein TauB (260 aa).

Residues 6 to 235 (AQQVSVVYAS…RYAHGEPMRS (230 aa)) enclose the ABC transporter domain. Position 40–47 (40–47 (GASGCGKS)) interacts with ATP.

The protein belongs to the ABC transporter superfamily. Taurine importer (TC 3.A.1.17.1) family. As to quaternary structure, the complex is composed of two ATP-binding proteins (TauB), two transmembrane proteins (TauC) and a solute-binding protein (TauA).

The protein localises to the cell inner membrane. The catalysed reaction is taurine(out) + ATP + H2O = taurine(in) + ADP + phosphate + H(+). Functionally, part of the ABC transporter complex TauABC involved in taurine import. Responsible for energy coupling to the transport system. The chain is Taurine import ATP-binding protein TauB from Burkholderia pseudomallei (strain 1710b).